A 198-amino-acid chain; its full sequence is Putative mycofactocin biosynthesis transcriptional regulator MftR (198 aa).

The HTH tetR-type domain maps to 12–72; that stretch reads STTPHHISDV…GDFSTHLAQL (61 aa). The segment at residues 35 to 54 is a DNA-binding region (H-T-H motif); that stretch reads SVDDIARAAGIARRTLFRYY.

Functionally, may regulate a gene cluster involved in mycofactocin expression. Mycofactocin is a conserved polypeptide that might serve as an electron carrier. The sequence is that of Putative mycofactocin biosynthesis transcriptional regulator MftR (mftR) from Mycobacterium tuberculosis (strain ATCC 25618 / H37Rv).